We begin with the raw amino-acid sequence, 548 residues long: Chaperonin GroEL (548 aa).

ATP contacts are provided by residues 30–33 (TLGP), Lys-51, 87–91 (DGTTT), Gly-415, 479–481 (NAA), and Asp-495.

This sequence belongs to the chaperonin (HSP60) family. Forms a cylinder of 14 subunits composed of two heptameric rings stacked back-to-back. Interacts with the co-chaperonin GroES.

The protein localises to the cytoplasm. It catalyses the reaction ATP + H2O + a folded polypeptide = ADP + phosphate + an unfolded polypeptide.. Together with its co-chaperonin GroES, plays an essential role in assisting protein folding. The GroEL-GroES system forms a nano-cage that allows encapsulation of the non-native substrate proteins and provides a physical environment optimized to promote and accelerate protein folding. The sequence is that of Chaperonin GroEL from Sodalis glossinidius (strain morsitans).